We begin with the raw amino-acid sequence, 363 residues long: Outer membrane porin C (363 aa).

Residues 1–21 (MKVKVLSLLVPALLVAGAANA) form the signal peptide. Over residues 174–187 (NGSASGEDQTNNGR) the composition is skewed to polar residues. A disordered region spans residues 174–195 (NGSASGEDQTNNGRTELRQNGD).

It belongs to the Gram-negative porin family. In terms of assembly, homotrimer. Probably forms mixed heterotrimers with OmpF; other mixed heterotrimers are also probable.

It is found in the cell outer membrane. Its function is as follows. Forms pores that allow passive diffusion of small molecules across the outer membrane. Functionally, (Microbial infection) Binds CdiA-EC536, probably acts as the outer membrane receptor for toxin CdiA-EC536 with OmpF. The sequence is that of Outer membrane porin C (ompC) from Enterobacter cloacae subsp. cloacae (strain ATCC 13047 / DSM 30054 / NBRC 13535 / NCTC 10005 / WDCM 00083 / NCDC 279-56).